The chain runs to 304 residues: MISTVQDSLEGHFHVLTPIKLNLALHIVGQRTDGYHLLESLVYFSLSGDCLSYAPCERDRFILTGPFAKGLSCNSINLAVRARDFMHKTFPRSAKPSSFQLMKTLPVASGIGGGSGDAASILNILRQKWKLDCSCEELAEMSLALGADVPMCLFALEYQQPLFVKGIGNDVTRLEEACSIAMVLVNHGQKIATETIFNALEKRNHPPLKINPVALKTVSSLVEVLQETRNDLFIPALKIAPQLAEVLSTLDESGSLFSRMSGSGATCFGIFKDQQAAQKAAAFIKSMHPNWFVKSIITLGRSSQ.

Residue Lys-20 is part of the active site. Pro-106–Gly-116 serves as a coordination point for ATP. Asp-148 is a catalytic residue.

Belongs to the GHMP kinase family. IspE subfamily.

The enzyme catalyses 4-CDP-2-C-methyl-D-erythritol + ATP = 4-CDP-2-C-methyl-D-erythritol 2-phosphate + ADP + H(+). Its pathway is isoprenoid biosynthesis; isopentenyl diphosphate biosynthesis via DXP pathway; isopentenyl diphosphate from 1-deoxy-D-xylulose 5-phosphate: step 3/6. Catalyzes the phosphorylation of the position 2 hydroxy group of 4-diphosphocytidyl-2C-methyl-D-erythritol. This is 4-diphosphocytidyl-2-C-methyl-D-erythritol kinase from Bartonella bacilliformis (strain ATCC 35685 / KC583 / Herrer 020/F12,63).